A 251-amino-acid chain; its full sequence is Adenosylcobinamide-GDP ribazoletransferase (251 aa).

6 consecutive transmembrane segments (helical) span residues 36-56, 60-80, 110-130, 181-201, 202-222, and 231-251; these read LYPFIGLIIGILWYLSFFVLS, VPIMLMAALILTVPYILTGFL, VGAFSVISVVLLLLVEFAGIF, EIILLGIYVLVALITFFTLGI, NYLIAILAMGLISFILLLKVK, and DVAGYILVLMEFTGILLLGII.

It belongs to the CobS family. The cofactor is Mg(2+).

It localises to the cell membrane. The enzyme catalyses alpha-ribazole + adenosylcob(III)inamide-GDP = adenosylcob(III)alamin + GMP + H(+). It catalyses the reaction alpha-ribazole 5'-phosphate + adenosylcob(III)inamide-GDP = adenosylcob(III)alamin 5'-phosphate + GMP + H(+). The protein operates within cofactor biosynthesis; adenosylcobalamin biosynthesis; adenosylcobalamin from cob(II)yrinate a,c-diamide: step 7/7. Its function is as follows. Joins adenosylcobinamide-GDP and alpha-ribazole to generate adenosylcobalamin (Ado-cobalamin). Also synthesizes adenosylcobalamin 5'-phosphate from adenosylcobinamide-GDP and alpha-ribazole 5'-phosphate. The sequence is that of Adenosylcobinamide-GDP ribazoletransferase from Clostridium perfringens (strain SM101 / Type A).